Consider the following 76-residue polypeptide: Defensin-like protein 163 (76 aa).

Residues 1 to 27 form the signal peptide; sequence MAKLIYSYLFISMFVLSVLLALPNAEG. Intrachain disulfides connect Cys-33–Cys-76, Cys-43–Cys-62, Cys-48–Cys-70, and Cys-52–Cys-72.

It belongs to the DEFL family.

The protein resides in the secreted. The polypeptide is Defensin-like protein 163 (LCR24) (Arabidopsis thaliana (Mouse-ear cress)).